Here is a 260-residue protein sequence, read N- to C-terminus: MKHSKKLLLCISFLLITIFISGCGFINKDDSKETEIKKSFNKTLSMYPIKNLEDLYDKEGYRDEEFNKNDKGTWVITSSINIQQKGEGLKTRRMVLFMNRNTRTSKGKFMITEVKEKSDIGFQTRKKEYPVKLIDNKFIPSKQIKDEKIKKEIENFKFFSQYGNFKDLKDYKDGEVSYNPNAPNYSAKYQLSNNDYNVKQIRKRYDIPTEQAPKLLLKGTGDLKGSSTGSKNIEFTFVEKKGENIYFTDSVEYTPSGDDK.

Residues M1–G22 form the signal peptide. C23 is lipidated: N-palmitoyl cysteine. The S-diacylglycerol cysteine moiety is linked to residue C23.

Belongs to the staphylococcal tandem lipoprotein family.

The protein resides in the cell membrane. This is an uncharacterized protein from Staphylococcus epidermidis (strain ATCC 35984 / DSM 28319 / BCRC 17069 / CCUG 31568 / BM 3577 / RP62A).